The primary structure comprises 332 residues: D-galactose/methyl-galactoside binding periplasmic protein MglB (332 aa).

The N-terminal stretch at 1-23 (MNKKVLTLSAVMASMLFGAAAHA) is a signal peptide. 2 residues coordinate beta-D-galactose: Asp37 and Asn114. Beta-D-glucose contacts are provided by Asp37 and Asn114. Residues Asp157, Asn159, Asp161, Gln163, and Gln165 each coordinate Ca(2+). Residues His175, Asp177, and Arg181 each contribute to the beta-D-galactose site. His175, Asp177, and Arg181 together coordinate beta-D-glucose. Glu228 is a binding site for Ca(2+). Beta-D-galactose is bound by residues Asn234, Asp259, and Asn279. Beta-D-glucose is bound by residues Asn234, Asp259, and Asn279.

The protein belongs to the bacterial solute-binding protein 2 family. As to quaternary structure, the ABC transporter complex is composed of one ATP-binding protein (MglA), two transmembrane proteins (MglC) and a solute-binding protein (MglB).

It is found in the periplasm. Part of the ABC transporter complex MglABC involved in galactose/methyl galactoside import. In addition, binds D-galactose and D-glucose and plays a role in the chemotaxis towards these two sugars by interacting with the Trg chemoreceptor. This Escherichia coli O6:H1 (strain CFT073 / ATCC 700928 / UPEC) protein is D-galactose/methyl-galactoside binding periplasmic protein MglB (mglB).